The sequence spans 127 residues: Cytochrome c2 (127 aa).

Residues 1–20 form the signal peptide; sequence MRKLVFGLFVLAASVAPAAA. The residue at position 21 (Gln-21) is a Pyrrolidone carboxylic acid. The heme c site is built by Cys-33, Cys-36, His-37, and Met-99.

Belongs to the cytochrome c family. Post-translationally, binds 1 heme c group covalently per subunit.

Its function is as follows. Cytochrome c2 is found mainly in purple, non-sulfur, photosynthetic bacteria where it functions as the electron donor to the oxidized bacteriochlorophyll in the photophosphorylation pathway. However, it may also have a role in the respiratory chain and is found in some non-photosynthetic bacteria. This Blastochloris viridis (Rhodopseudomonas viridis) protein is Cytochrome c2 (cycA).